The primary structure comprises 255 residues: Major prion protein (255 aa).

The first 24 residues, 1–24 (MVKSHIGSWILVLFVAMWSDVGLC), serve as a signal peptide directing secretion. The interaction with ADGRG6 stretch occupies residues 25–41 (KKRPKPGGGWNTGGSRY). An interaction with GRB2, ERI3 and SYN1 region spans residues 25-232 (KKRPKPGGGW…ESEAYYQRGA (208 aa)). A disordered region spans residues 28–110 (PKPGGGWNTG…QWNKPSKPKT (83 aa)). A run of 5 repeats spans residues 54-62 (PQGGGGWGQ), 63-70 (PHGGGWGQ), 71-78 (PHGGGWGQ), 79-86 (PHGGGWGQ), and 87-94 (PHGGGGWG). Residues 54–94 (PQGGGGWGQPHGGGWGQPHGGGWGQPHGGGWGQPHGGGGWG) are 5 X 8 AA tandem repeats of P-H-G-G-G-W-G-Q. The span at 55–97 (QGGGGWGQPHGGGWGQPHGGGWGQPHGGGWGQPHGGGGWGQGG) shows a compositional bias: gly residues. Cu(2+)-binding residues include His64, Gly65, Gly66, His72, Gly73, Gly74, His80, Gly81, Gly82, His88, Gly90, and Gly91. N-linked (GlcNAc...) asparagine glycosylation is found at Asn174, Asn184, and Asn199. Cysteines 182 and 216 form a disulfide. Ala232 carries GPI-anchor amidated alanine lipidation. Positions 233–255 (SVILFSSPPVILLVSFLIFLIVG) are cleaved as a propeptide — removed in mature form.

It belongs to the prion family. Monomer and homodimer. Has a tendency to aggregate into amyloid fibrils containing a cross-beta spine, formed by a steric zipper of superposed beta-strands. Soluble oligomers may represent an intermediate stage on the path to fibril formation. Copper binding may promote oligomerization. Interacts with GRB2, APP, ERI3/PRNPIP and SYN1. Mislocalized cytosolically exposed PrP interacts with MGRN1; this interaction alters MGRN1 subcellular location and causes lysosomal enlargement. Interacts with APP. Interacts with KIAA1191. Interacts with ADGRG6.

It localises to the cell membrane. The protein resides in the golgi apparatus. In terms of biological role, its primary physiological function is unclear. May play a role in neuronal development and synaptic plasticity. May be required for neuronal myelin sheath maintenance. May promote myelin homeostasis through acting as an agonist for ADGRG6 receptor. May play a role in iron uptake and iron homeostasis. Soluble oligomers are toxic to cultured neuroblastoma cells and induce apoptosis (in vitro). Association with GPC1 (via its heparan sulfate chains) targets PRNP to lipid rafts. Also provides Cu(2+) or Zn(2+) for the ascorbate-mediated GPC1 deaminase degradation of its heparan sulfate side chains. The chain is Major prion protein (PRNP) from Canis lupus familiaris (Dog).